Reading from the N-terminus, the 839-residue chain is Protein translocase subunit SecA (839 aa).

Residues Gln85, 103-107 (GEGKT), and Asp493 each bind ATP. Residues 780–790 (QIHEQERERAS) are compositionally biased toward basic and acidic residues. The disordered stretch occupies residues 780–839 (QIHEQERERASQRATTAAPQNIQSQQSANTDDLPKVERNEACPCGSGKKFKNCHGRKSFS). Residues 791 to 809 (QRATTAAPQNIQSQQSANT) show a composition bias toward polar residues. Cys821, Cys823, Cys832, and His833 together coordinate Zn(2+). The span at 827 to 839 (KKFKNCHGRKSFS) shows a compositional bias: basic residues.

This sequence belongs to the SecA family. Monomer and homodimer. Part of the essential Sec protein translocation apparatus which comprises SecA, SecYEG and auxiliary proteins SecDF. Other proteins may also be involved. Requires Zn(2+) as cofactor.

The protein localises to the cell membrane. Its subcellular location is the cytoplasm. The enzyme catalyses ATP + H2O + cellular proteinSide 1 = ADP + phosphate + cellular proteinSide 2.. Its function is as follows. Part of the Sec protein translocase complex. Interacts with the SecYEG preprotein conducting channel. Has a central role in coupling the hydrolysis of ATP to the transfer of proteins into and across the cell membrane, serving as an ATP-driven molecular motor driving the stepwise translocation of polypeptide chains across the membrane. This is Protein translocase subunit SecA from Streptococcus pyogenes serotype M3 (strain ATCC BAA-595 / MGAS315).